A 62-amino-acid chain; its full sequence is Prokaryotic ubiquitin-like protein Pup 2 (62 aa).

Residues 1–34 are disordered; that stretch reads MRQEKPKRHGREDDEPPEPAPAGRARDTTVGDDT. The ARC ATPase binding stretch occupies residues 21–56; sequence PAGRARDTTVGDDTDELLDEIDGVLEENAVEFVRSY. Glu62 participates in a covalent cross-link: Isoglutamyl lysine isopeptide (Glu-Lys) (interchain with K-? in acceptor proteins).

It belongs to the prokaryotic ubiquitin-like protein family. In terms of assembly, strongly interacts with the proteasome-associated ATPase ARC through a hydrophobic interface; the interacting region of Pup lies in its C-terminal half. There is one Pup binding site per ARC hexamer ring.

It functions in the pathway protein degradation; proteasomal Pup-dependent pathway. Functionally, protein modifier that is covalently attached to lysine residues of substrate proteins, thereby targeting them for proteasomal degradation. The tagging system is termed pupylation. The sequence is that of Prokaryotic ubiquitin-like protein Pup 2 from Saccharopolyspora erythraea (strain ATCC 11635 / DSM 40517 / JCM 4748 / NBRC 13426 / NCIMB 8594 / NRRL 2338).